Consider the following 3434-residue polypeptide: Genome polyprotein (3434 aa).

The segment at 2–15 is interaction with host EXOC1; that stretch reads SKKPGGPGKPRVVN. The Cytoplasmic portion of the chain corresponds to 2–110; that stretch reads SKKPGGPGKP…KQKKRGGSET (109 aa). The segment at 37–72 is hydrophobic; homodimerization of capsid protein C; it reads LLDGRGPIRFVLALLAFFRFTALAPTKALMRRWKSV. Residues 106 to 125 constitute a propeptide, ER anchor for the capsid protein C, removed in mature form by serine protease NS3; it reads GGSETSVLMLIFMLIGFAAA. A helical membrane pass occupies residues 111–131; the sequence is SVLMLIFMLIGFAAALKLSTF. Topologically, residues 132 to 251 are extracellular; it reads QGKIMMTVNA…ATRYLTKTEN (120 aa). An N-linked (GlcNAc...) asparagine; by host glycan is attached at N140. The chain crosses the membrane as a helical span at residues 252–272; sequence WIIRNPGYALVAVVLGWMLGS. The Cytoplasmic segment spans residues 273–277; that stretch reads NTGQK. The chain crosses the membrane as a helical span at residues 278-292; that stretch reads VIFTVLLLLVAPAYS. Topologically, residues 293–745 are extracellular; the sequence is FNCLGMSSRD…QVFGGAFRTL (453 aa). 6 disulfide bridges follow: C295–C322, C352–C408, C352–C413, C366–C397, C384–C408, and C384–C413. The segment at 390 to 403 is fusion peptide; sequence DRGWGNGCGLFGKG. An N-linked (GlcNAc...) asparagine; by host glycan is attached at N446. 2 cysteine pairs are disulfide-bonded: C482–C580 and C597–C628. The helical transmembrane segment at 746 to 766 threads the bilayer; it reads FGGMSWISPGLLGALLLWMGV. Over 767-772 the chain is Cytoplasmic; sequence NARDKS. The chain crosses the membrane as a helical span at residues 773–793; it reads IALAFLATGGVLLFLATNVHA. Residues 794 to 1218 are Extracellular-facing; sequence DTGCAIDITR…AFAESNNGGD (425 aa). Intrachain disulfides connect C797–C808 and C848–C936. Residues N923 and N968 are each glycosylated (N-linked (GlcNAc...) asparagine; by host). Disulfide bonds link C972-C1016, C1073-C1122, C1084-C1105, and C1106-C1109. N1000 carries N-linked (GlcNAc...) (high mannose) asparagine; by host glycosylation. A helical transmembrane segment spans residues 1219–1239; that stretch reads VIHLALIAVFKVQPAFLVASL. Topologically, residues 1240 to 1249 are cytoplasmic; sequence TRSRWTNQEN. A helical transmembrane segment spans residues 1250–1270; that stretch reads LVLVLGAAFFQMAASDLELTI. Residues 1271 to 1286 lie on the Lumenal side of the membrane; that stretch reads PGLLNSAATAWMVLRA. Residues 1287–1307 form a helical membrane-spanning segment; it reads MAFPSTSAIAMPMLAMLAPGM. A topological domain (cytoplasmic) is located at residue R1308. The chain crosses the membrane as a helical span at residues 1309–1329; sequence MLHLDTYRIVLLLIGICSLLN. Residues 1330–1340 are Lumenal-facing; it reads ERRRSVEKKKG. A helical transmembrane segment spans residues 1341 to 1361; that stretch reads AVLIGLALTSTGYFSPTIMAA. The Cytoplasmic segment spans residues 1362 to 1373; sequence GLMICNPNKKRG. The helical transmembrane segment at 1374–1394 threads the bilayer; sequence WPATEVLTAVGLMFAIVGGLA. The Lumenal segment spans residues 1395 to 1397; that stretch reads ELD. The helical transmembrane segment at 1398–1418 threads the bilayer; it reads IDSMSVPFTIAGLMLVSYVIS. Residues 1419-1475 are Cytoplasmic-facing; the sequence is GKATDMWLERAADVSWEAGAAITGTSERLDVQLDDDGDFHLLNDPGVPWKIWVLRMT. The interacts with and activates NS3 protease stretch occupies residues 1426-1465; sequence LERAADVSWEAGAAITGTSERLDVQLDDDGDFHLLNDPGV. The helical intramembrane region spans 1476-1496; sequence CLSVAAITPRAILPSAFGYWL. The Cytoplasmic segment spans residues 1497–2172; that stretch reads TLKYTKRGGV…RMALEELPDA (676 aa). Residues 1504–1681 form the Peptidase S7 domain; the sequence is GGVFWDTPSP…ERVEEPVPEA (178 aa). Residues H1554, D1578, and S1638 each act as charge relay system; for serine protease NS3 activity in the active site. Positions 1684 to 1840 constitute a Helicase ATP-binding domain; sequence PEMLKKRQLT…DTNSPVHDVS (157 aa). The important for RNA-binding stretch occupies residues 1688–1691; sequence KKRQ. Position 1697–1704 (1697–1704) interacts with ATP; sequence LHPGAGKT. The short motif at 1788-1791 is the DEAH box element; sequence DEAH. The region spanning 1851–2016 is the Helicase C-terminal domain; the sequence is GFEWITDYAG…GLVAQLYGPE (166 aa). Position 1892 is an N6-acetyllysine; by host (K1892). Residues 1958–1979 form a disordered region; sequence AAQRRGRVGRNPSQIGDEYHYG. A regulates the ATPase activity of NS3 helicase region spans residues 2167–2171; it reads EELPD. A helical membrane pass occupies residues 2173–2193; the sequence is LETITLIAALGVMTAGFFLLM. Over 2194 to 2197 the chain is Lumenal; the sequence is MQRK. The helical intramembrane region spans 2198 to 2218; that stretch reads GIGKLGLGALVLVVATFFLWM. Residues 2219–2220 are Lumenal-facing; the sequence is SD. Residues 2221-2241 form a helical membrane-spanning segment; the sequence is VSGTKIAGVLLLALLMMVVLI. Topologically, residues 2242–2256 are cytoplasmic; it reads PEPEKQRSQTDNQLA. A helical membrane pass occupies residues 2257–2271; it reads VFLICVLLVVGLVAA. The Lumenal segment spans residues 2272-2309; that stretch reads NEYGMLERTKTDIRNLFGKSLIEENEVHIPPFDFFTLD. The segment at residues 2310 to 2330 is an intramembrane region (helical); the sequence is LKPATAWALYGGSTVVLTPLI. Residues 2331–2366 lie on the Lumenal side of the membrane; sequence KHLVTSQYVTTSLASINAQAGSLFTLPKGIPFTDFD. Residues 2367–2394 form a helical membrane-spanning segment; sequence LSVALVFLGCWGQVTLTTLIMATILVTL. The Cytoplasmic segment spans residues 2395-2446; that stretch reads HYGYLLPGWQAEALRAAQKRTAAGIMKNAVVDGIVATDVPELERTTPQMQKR. A helical transmembrane segment spans residues 2447 to 2467; it reads LGQILLVLASVAAVCVNPRIT. Over 2468-2498 the chain is Lumenal; sequence TIREAGILCTAAALTLWDNNASAAWNSTTAT. The helical transmembrane segment at 2499–2519 threads the bilayer; that stretch reads GLCHVMRGSWIAGASIAWTLI. The Cytoplasmic segment spans residues 2520 to 3434; it reads KNAEKPAFKR…ETHVSEDRVL (915 aa). Residues 2530-2795 form the mRNA cap 0-1 NS5-type MT domain; that stretch reads GRAGGRTLGE…DVNLGSGTRA (266 aa). S2585 is a binding site for S-adenosyl-L-methionine. S2585 carries the post-translational modification Phosphoserine. The active-site For 2'-O-MTase activity is the K2590. Positions 2615, 2616, 2633, 2634, 2660, and 2661 each coordinate S-adenosyl-L-methionine. Catalysis depends on D2675, which acts as the For 2'-O-MTase activity. I2676 contributes to the S-adenosyl-L-methionine binding site. Residues K2711 and E2747 each act as for 2'-O-MTase activity in the active site. An S-adenosyl-L-methionine-binding site is contributed by Y2749. Zn(2+) is bound by residues E2969, H2973, C2978, and C2981. Positions 3059-3211 constitute a RdRp catalytic domain; the sequence is GKIYADDTAG…KPLDDRFSTA (153 aa). Residues H3246, C3262, and C3381 each coordinate Zn(2+).

In the N-terminal section; belongs to the class I-like SAM-binding methyltransferase superfamily. mRNA cap 0-1 NS5-type methyltransferase family. Homodimer. Interacts (via N-terminus) with host EXOC1 (via C-terminus); this interaction results in EXOC1 degradation through the proteasome degradation pathway. In terms of assembly, forms heterodimers with envelope protein E in the endoplasmic reticulum and Golgi. As to quaternary structure, homodimer; in the endoplasmic reticulum and Golgi. Interacts with protein prM. Interacts with non-structural protein 1. Homodimer; Homohexamer when secreted. Interacts with envelope protein E. NS1 interacts with NS4B. Interacts with host complement protein CFH; this interaction leads to the degradation of C3. In terms of assembly, interacts (via N-terminus) with serine protease NS3. As to quaternary structure, forms a heterodimer with serine protease NS3. May form homooligomers. Forms a heterodimer with NS2B. Interacts with non-structural protein 2A (via N-terminus). Interacts with NS4B. Interacts with unphosphorylated RNA-directed RNA polymerase NS5; this interaction stimulates RNA-directed RNA polymerase NS5 guanylyltransferase activity. In terms of assembly, interacts with serine protease NS3. As to quaternary structure, homodimer. Interacts with host STAT2; this interaction inhibits the phosphorylation of the latter, and, when all viral proteins are present (polyprotein), targets STAT2 for degradation. Interacts with serine protease NS3. Post-translationally, specific enzymatic cleavages in vivo yield mature proteins. Cleavages in the lumen of endoplasmic reticulum are performed by host signal peptidase, whereas cleavages in the cytoplasmic side are performed by serine protease NS3. Signal cleavage at the 2K-4B site requires a prior NS3 protease-mediated cleavage at the 4A-2K site. Cleaved in post-Golgi vesicles by a host furin, releasing the mature small envelope protein M, and peptide pr. This cleavage is incomplete as up to 30% of viral particles still carry uncleaved prM. In terms of processing, N-glycosylated. Post-translationally, N-glycosylated. The excreted form is glycosylated and this is required for efficient secretion of the protein from infected cells. Acetylated by host KAT5. Acetylation modulates NS3 RNA-binding and unwinding activities and plays an important positive role for viral replication. In terms of processing, phosphorylated on serines residues. This phosphorylation may trigger NS5 nuclear localization.

Its subcellular location is the virion. The protein resides in the host nucleus. The protein localises to the host cytoplasm. It is found in the host perinuclear region. It localises to the secreted. Its subcellular location is the virion membrane. The protein resides in the host endoplasmic reticulum membrane. It catalyses the reaction Selective hydrolysis of -Xaa-Xaa-|-Yaa- bonds in which each of the Xaa can be either Arg or Lys and Yaa can be either Ser or Ala.. The enzyme catalyses RNA(n) + a ribonucleoside 5'-triphosphate = RNA(n+1) + diphosphate. It carries out the reaction a ribonucleoside 5'-triphosphate + H2O = a ribonucleoside 5'-diphosphate + phosphate + H(+). The catalysed reaction is ATP + H2O = ADP + phosphate + H(+). It catalyses the reaction a 5'-end (5'-triphosphoguanosine)-ribonucleoside in mRNA + S-adenosyl-L-methionine = a 5'-end (N(7)-methyl 5'-triphosphoguanosine)-ribonucleoside in mRNA + S-adenosyl-L-homocysteine. The enzyme catalyses a 5'-end (N(7)-methyl 5'-triphosphoguanosine)-ribonucleoside in mRNA + S-adenosyl-L-methionine = a 5'-end (N(7)-methyl 5'-triphosphoguanosine)-(2'-O-methyl-ribonucleoside) in mRNA + S-adenosyl-L-homocysteine + H(+). Its function is as follows. Plays a role in virus budding by binding to the cell membrane and gathering the viral RNA into a nucleocapsid that forms the core of a mature virus particle. During virus entry, may induce genome penetration into the host cytoplasm after hemifusion induced by the surface proteins. Can migrate to the cell nucleus where it modulates host functions. Overcomes the anti-viral effects of host EXOC1 by sequestering and degrading the latter through the proteasome degradation pathway. Inhibits RNA silencing by interfering with host Dicer. Functionally, prevents premature fusion activity of envelope proteins in trans-Golgi by binding to envelope protein E at pH6.0. After virion release in extracellular space, gets dissociated from E dimers. In terms of biological role, acts as a chaperone for envelope protein E during intracellular virion assembly by masking and inactivating envelope protein E fusion peptide. prM is the only viral peptide matured by host furin in the trans-Golgi network probably to avoid catastrophic activation of the viral fusion activity in acidic Golgi compartment prior to virion release. prM-E cleavage is inefficient, and many virions are only partially matured. These uncleaved prM would play a role in immune evasion. Its function is as follows. May play a role in virus budding. Exerts cytotoxic effects by activating a mitochondrial apoptotic pathway through M ectodomain. May display a viroporin activity. Binds to host cell surface receptor and mediates fusion between viral and cellular membranes. Envelope protein is synthesized in the endoplasmic reticulum in the form of heterodimer with protein prM. They play a role in virion budding in the ER, and the newly formed immature particle is covered with 60 spikes composed of heterodimer between precursor prM and envelope protein E. The virion is transported to the Golgi apparatus where the low pH causes dissociation of PrM-E heterodimers and formation of E homodimers. prM-E cleavage is inefficient, and many virions are only partially matured. These uncleaved prM would play a role in immune evasion. Functionally, involved in immune evasion, pathogenesis and viral replication. Once cleaved off the polyprotein, is targeted to three destinations: the viral replication cycle, the plasma membrane and the extracellular compartment. Essential for viral replication. Required for formation of the replication complex and recruitment of other non-structural proteins to the ER-derived membrane structures. Excreted as a hexameric lipoparticle that plays a role against host immune response. Antagonizing the complement function. Binds to the host macrophages and dendritic cells. Inhibits signal transduction originating from Toll-like receptor 3 (TLR3). In terms of biological role, component of the viral RNA replication complex that functions in virion assembly and antagonizes the host alpha/beta interferon antiviral response. Its function is as follows. Required cofactor for the serine protease function of NS3. May have membrane-destabilizing activity and form viroporins. Displays three enzymatic activities: serine protease, NTPase and RNA helicase. NS3 serine protease, in association with NS2B, performs its autocleavage and cleaves the polyprotein at dibasic sites in the cytoplasm: C-prM, NS2A-NS2B, NS2B-NS3, NS3-NS4A, NS4A-2K and NS4B-NS5. NS3 RNA helicase binds RNA and unwinds dsRNA in the 3' to 5' direction. Functionally, regulates the ATPase activity of the NS3 helicase activity. NS4A allows NS3 helicase to conserve energy during unwinding. In terms of biological role, functions as a signal peptide for NS4B and is required for the interferon antagonism activity of the latter. Its function is as follows. Induces the formation of ER-derived membrane vesicles where the viral replication takes place. Inhibits interferon (IFN)-induced host STAT1 phosphorylation and nuclear translocation, thereby preventing the establishment of cellular antiviral state by blocking the IFN-alpha/beta pathway. Inhibits STAT2 translocation in the nucleus after IFN-alpha treatment. Replicates the viral (+) and (-) RNA genome, and performs the capping of genomes in the cytoplasm. NS5 methylates viral RNA cap at guanine N-7 and ribose 2'-O positions. Besides its role in RNA genome replication, also prevents the establishment of cellular antiviral state by blocking the interferon-alpha/beta (IFN-alpha/beta) signaling pathway. Inhibits host TYK2 and STAT2 phosphorylation, thereby preventing activation of JAK-STAT signaling pathway. The protein is Genome polyprotein of Culex annulirostris (Common banded mosquito).